The following is a 159-amino-acid chain: UPF0178 protein AZC_4000 (159 aa).

It belongs to the UPF0178 family.

The protein is UPF0178 protein AZC_4000 of Azorhizobium caulinodans (strain ATCC 43989 / DSM 5975 / JCM 20966 / LMG 6465 / NBRC 14845 / NCIMB 13405 / ORS 571).